Consider the following 214-residue polypeptide: Histone H1.1 (214 aa).

Positions 1–43 (MSETAPVPQPASVAPEKPAATKKTRKPAKAAVPRKKPAGPSVS) are disordered. Position 2 is an N-acetylserine (Ser-2). Ser-2 and Ser-12 each carry phosphoserine. Lys-17 bears the N6-acetyllysine mark. The span at 20 to 37 (ATKKTRKPAKAAVPRKKP) shows a compositional bias: basic residues. At Lys-36 the chain carries N6-(beta-hydroxybutyryl)lysine. The region spanning 38–111 (AGPSVSELIV…GAAGSFKLNK (74 aa)) is the H15 domain. Residue Ser-43 is modified to Phosphoserine. At Lys-54 the chain carries N6-(beta-hydroxybutyryl)lysine. The residue at position 56 (Arg-56) is a Citrulline. Lys-66 carries the N6-(beta-hydroxybutyryl)lysine modification. A Phosphoserine modification is found at Ser-67. Residue Lys-77 is modified to N6-acetyllysine. The residue at position 87 (Lys-87) is an N6-(beta-hydroxybutyryl)lysine. The residue at position 92 (Lys-92) is an N6-(beta-hydroxybutyryl)lysine; alternate. Lys-92 carries the post-translational modification N6-acetyllysine; alternate. The interval 93–214 (GTLVQTKGTG…KPKKAAPKKK (122 aa)) is disordered. The residue at position 106 (Ser-106) is a Phosphoserine. Lys-108 carries the N6-(beta-hydroxybutyryl)lysine modification. Low complexity predominate over residues 116 to 144 (KASTTKVTVKAKASGAAKKPKKTAGAAAK). N6-acetyllysine is present on Lys-121. Composition is skewed to basic residues over residues 145–179 (KTVK…KKVA) and 186–214 (KAVK…PKKK). Thr-202 bears the Phosphothreonine mark.

The protein belongs to the histone H1/H5 family. In terms of assembly, interacts with DFFB. In terms of processing, H1 histones are progressively phosphorylated during the cell cycle, becoming maximally phosphorylated during late G2 phase and M phase, and being dephosphorylated sharply thereafter. Post-translationally, citrullination at Arg-56 (H1R54ci) by PADI4 takes place within the DNA-binding site of H1 and results in its displacement from chromatin and global chromatin decondensation, thereby promoting pluripotency and stem cell maintenance.

It localises to the nucleus. The protein resides in the chromosome. Its function is as follows. H1 histones bind to linker DNA between nucleosomes forming the macromolecular structure known as the chromatin fiber. H1 histones are necessary for the condensation of nucleosome chains into higher-order structured fibers. Also acts as a regulator of individual gene transcription through chromatin remodeling. The protein is Histone H1.1 of Rattus norvegicus (Rat).